A 2515-amino-acid polypeptide reads, in one-letter code: Protein tudor (2515 aa).

Phosphoserine occurs at positions 226, 235, and 239. Tudor domains lie at 455 to 513 (APEL…LLEI) and 641 to 696 (QLIL…HLEM). At S800 the chain carries Phosphoserine. The segment at 840–996 (QAVKSVSGSK…SSSESVAAAK (157 aa)) is disordered. The span at 890–900 (STGSYSSGMSS) shows a compositional bias: low complexity. Over residues 906-917 (RQQNGRTPIQSP) the composition is skewed to polar residues. Basic and acidic residues predominate over residues 918–927 (RHNEKQEAKK). Polar residues-rich tracts occupy residues 943-954 (GQQGNQRSQNAP) and 964-976 (QKST…SSKR). The span at 977-995 (SSGVGSDIASSSSESVAAA) shows a compositional bias: low complexity. Tudor domains lie at 1062-1122 (QLKV…FADP) and 1355-1414 (KFDV…FYEH). The tract at residues 1515–1589 (EEDKGRKETV…KPATPVPEVV (75 aa)) is disordered. Residues 1540–1553 (NDKDREPKKSKPAE) are compositionally biased toward basic and acidic residues. A compositionally biased stretch (pro residues) spans 1569 to 1584 (SPVPAEPAPVPKPATP). Tudor domains are found at residues 1662 to 1718 (NVVN…SHIE), 1839 to 1898 (GFEK…SLPS), 2023 to 2082 (KAAV…LIKP), 2211 to 2269 (TTNS…PIPS), and 2392 to 2451 (DLKE…KPAR).

In terms of assembly, may form part of a piRNA processing complex consisting of tud, aub and AGO3. Interacts with AGO3 (when symmetrically dimethylated on Arg residues) and aub (when symmetrically dimethylated on Arg residues). Interacts with vls. Interacts with me31B/DDX6 (when symmetrically dimethylated on Arg residues).

Its subcellular location is the cytoplasm. It localises to the perinuclear region. The protein resides in the cytoplasmic ribonucleoprotein granule. Functionally, may act via the Piwi-interacting RNA (piRNA) metabolic process mediated by aub and AGO3 Piwi proteins, which mediates the repression of transposable elements during meiosis by forming complexes composed of piRNAs and Piwi proteins and governs the methylation and subsequent repression of transposons. Required during oogenesis for the formation of primordial germ cells and for normal abdominal segmentation. Not involved in repression of retroelements. This is Protein tudor from Drosophila melanogaster (Fruit fly).